A 276-amino-acid chain; its full sequence is F420-dependent methylenetetrahydromethanopterin dehydrogenase (276 aa).

Residues 253–276 (TVLRTPHGKEGKTLSKKDLLAKPE) form a disordered region. A compositionally biased stretch (basic and acidic residues) spans 259 to 276 (HGKEGKTLSKKDLLAKPE).

It belongs to the MTD family. As to quaternary structure, found to be tightly associated with methyl-coenzyme M methylreductase.

It catalyses the reaction 5,10-methylenetetrahydromethanopterin + oxidized coenzyme F420-(gamma-L-Glu)(n) + 2 H(+) = 5,10-methenyl-5,6,7,8-tetrahydromethanopterin + reduced coenzyme F420-(gamma-L-Glu)(n). The protein operates within one-carbon metabolism; methanogenesis from CO(2); 5,10-methylene-5,6,7,8-tetrahydromethanopterin from 5,10-methenyl-5,6,7,8-tetrahydromethanopterin (coenzyme F420 route): step 1/1. Its activity is regulated as follows. Activity requires salt; 100 mM sodium or potassium salts of chloride, phosphate or sulfate are equally effective. Not inactivated by O(2). Inhibited by hydrogen-producing 5,10-methenyltetrahydromethanopterin hydrogenase which has a higher affinity for their shared substrate. Enzyme is O(2)-stable and strictly dependent on coenzyme F420. In terms of biological role, catalyzes the reversible reduction of methenyl-H(4)MPT(+) to methylene-H(4)MPT. The sequence is that of F420-dependent methylenetetrahydromethanopterin dehydrogenase from Methanothermobacter marburgensis (strain ATCC BAA-927 / DSM 2133 / JCM 14651 / NBRC 100331 / OCM 82 / Marburg) (Methanobacterium thermoautotrophicum).